A 153-amino-acid polypeptide reads, in one-letter code: Aspartate carbamoyltransferase regulatory chain (153 aa).

Residues C110, C115, C138, and C141 each coordinate Zn(2+).

Belongs to the PyrI family. Contains catalytic and regulatory chains. It depends on Zn(2+) as a cofactor.

Functionally, involved in allosteric regulation of aspartate carbamoyltransferase. The protein is Aspartate carbamoyltransferase regulatory chain of Bacteroides thetaiotaomicron (strain ATCC 29148 / DSM 2079 / JCM 5827 / CCUG 10774 / NCTC 10582 / VPI-5482 / E50).